A 274-amino-acid polypeptide reads, in one-letter code: Large ribosomal subunit protein uL2c (274 aa).

The disordered stretch occupies residues 224-274 (NPVDHPHGGGEGRAPIGRKKPTTPWGYPALGRKSRKRNKYSEKFILRHRSK).

Belongs to the universal ribosomal protein uL2 family. In terms of assembly, part of the 50S ribosomal subunit.

The protein localises to the plastid. It is found in the chloroplast. The polypeptide is Large ribosomal subunit protein uL2c (rpl2) (Ipomoea purpurea (Common morning glory)).